A 61-amino-acid chain; its full sequence is Large ribosomal subunit protein uL30 (61 aa).

It belongs to the universal ribosomal protein uL30 family. In terms of assembly, part of the 50S ribosomal subunit.

This Maricaulis maris (strain MCS10) (Caulobacter maris) protein is Large ribosomal subunit protein uL30.